Consider the following 248-residue polypeptide: Ribosomal RNA small subunit methyltransferase J (248 aa).

S-adenosyl-L-methionine-binding positions include 97 to 98, 113 to 114, and aspartate 167; these read RD and ER.

The protein belongs to the methyltransferase superfamily. RsmJ family.

It is found in the cytoplasm. It carries out the reaction guanosine(1516) in 16S rRNA + S-adenosyl-L-methionine = N(2)-methylguanosine(1516) in 16S rRNA + S-adenosyl-L-homocysteine + H(+). Specifically methylates the guanosine in position 1516 of 16S rRNA. The polypeptide is Ribosomal RNA small subunit methyltransferase J (Aeromonas hydrophila subsp. hydrophila (strain ATCC 7966 / DSM 30187 / BCRC 13018 / CCUG 14551 / JCM 1027 / KCTC 2358 / NCIMB 9240 / NCTC 8049)).